Here is a 122-residue protein sequence, read N- to C-terminus: MSSLAQKKTARLKRQIRVRKKIRGTAERPRLNVFKTAKHIYAQLIDDTCGATLAAASTLLDEVSTGLSYTGNIEAAQKVGAAIAQKALAKEINMVVFDRNGFLYHGRIKALAEAARENGLSF.

Belongs to the universal ribosomal protein uL18 family. In terms of assembly, part of the 50S ribosomal subunit; part of the 5S rRNA/L5/L18/L25 subcomplex. Contacts the 5S and 23S rRNAs.

Its function is as follows. This is one of the proteins that bind and probably mediate the attachment of the 5S RNA into the large ribosomal subunit, where it forms part of the central protuberance. The sequence is that of Large ribosomal subunit protein uL18 from Geotalea uraniireducens (strain Rf4) (Geobacter uraniireducens).